The following is a 542-amino-acid chain: MTRYIFITGGVVSSLGKGLASAALGALLQARGYSVRLRKLDPYLNVDPGTMSPIQHGEVYVTDDGAETDLDLGHYERFTGVPASRADNITTGRIYQEIIQRERRGDYLGGTVQVIPHVTDAIKEFVLSGNLDVDFVLCEIGGTVGDIEGLPFFEAIRQLGNELDRGQTCYIHLTLLPFIPSAGEMKTKPTQHSVKELRSIGIQPDILMCRCDRPIPKDERRKIALFCNVRETAVIQAMDVDTIYDVPNAYHLEGLDDEVLSVFGIKGSKEPNLAKWQTIAHNIREPEGDVTIAIVGKYTGLKDAYKSLSEALVHGGIANKVRVNVKWVESEVFDTEDTAFYLEDVDGILVPGGFGERGSEGKIRAAQFARTRNVPYFGICFGMQMAVIEALRNVGGLEGASSTEFGPTNEPVVGLMTEWMRENELVKRAAHGDLGGTMRLGAYDAMLAEGSRVAQIYGSTVISERHRHRYEVNMTYREQIEAAGLLMSGVSPDGLLPEIIEIPDHPWYIGVQYHPELKSKPFEPHPLFRSFVEAAVEQSRLV.

The segment at 1–265 (MTRYIFITGG…DDEVLSVFGI (265 aa)) is amidoligase domain. CTP is bound at residue Ser13. Residue Ser13 participates in UTP binding. Residues 14-19 (SLGKGL) and Asp71 each bind ATP. Residues Asp71 and Glu139 each contribute to the Mg(2+) site. CTP contacts are provided by residues 146–148 (DIE), 186–191 (KTKPTQ), and Lys222. Residues 186 to 191 (KTKPTQ) and Lys222 each bind UTP. Positions 291–541 (TIAIVGKYTG…VEAAVEQSRL (251 aa)) constitute a Glutamine amidotransferase type-1 domain. Residue Gly353 participates in L-glutamine binding. Cys380 acts as the Nucleophile; for glutamine hydrolysis in catalysis. Residues 381-384 (FGMQ), Glu404, and Arg469 each bind L-glutamine. Catalysis depends on residues His514 and Glu516.

Belongs to the CTP synthase family. In terms of assembly, homotetramer.

The enzyme catalyses UTP + L-glutamine + ATP + H2O = CTP + L-glutamate + ADP + phosphate + 2 H(+). It carries out the reaction L-glutamine + H2O = L-glutamate + NH4(+). The catalysed reaction is UTP + NH4(+) + ATP = CTP + ADP + phosphate + 2 H(+). Its pathway is pyrimidine metabolism; CTP biosynthesis via de novo pathway; CTP from UDP: step 2/2. With respect to regulation, allosterically activated by GTP, when glutamine is the substrate; GTP has no effect on the reaction when ammonia is the substrate. The allosteric effector GTP functions by stabilizing the protein conformation that binds the tetrahedral intermediate(s) formed during glutamine hydrolysis. Inhibited by the product CTP, via allosteric rather than competitive inhibition. In terms of biological role, catalyzes the ATP-dependent amination of UTP to CTP with either L-glutamine or ammonia as the source of nitrogen. Regulates intracellular CTP levels through interactions with the four ribonucleotide triphosphates. This Parvibaculum lavamentivorans (strain DS-1 / DSM 13023 / NCIMB 13966) protein is CTP synthase.